The sequence spans 471 residues: tRNA-2-methylthio-N(6)-dimethylallyladenosine synthase (471 aa).

The region spanning 29 to 146 is the MTTase N-terminal domain; that stretch reads KKFHIKTYGC…LPELIAKVNR (118 aa). The [4Fe-4S] cluster site is built by C38, C74, C109, C187, C191, and C194. In terms of domain architecture, Radical SAM core spans 173–405; the sequence is RVPQSSAFLS…QQLLKEKQLE (233 aa). Residues 408-467 form the TRAM domain; it reads KKMIGKTVTVLFDKKHPDKISGRTEYMQQVFSDDSNLLDKIVTMRVEDASTFTLKCTAED.

Belongs to the methylthiotransferase family. MiaB subfamily. Monomer. [4Fe-4S] cluster serves as cofactor.

The protein localises to the cytoplasm. It catalyses the reaction N(6)-dimethylallyladenosine(37) in tRNA + (sulfur carrier)-SH + AH2 + 2 S-adenosyl-L-methionine = 2-methylsulfanyl-N(6)-dimethylallyladenosine(37) in tRNA + (sulfur carrier)-H + 5'-deoxyadenosine + L-methionine + A + S-adenosyl-L-homocysteine + 2 H(+). Catalyzes the methylthiolation of N6-(dimethylallyl)adenosine (i(6)A), leading to the formation of 2-methylthio-N6-(dimethylallyl)adenosine (ms(2)i(6)A) at position 37 in tRNAs that read codons beginning with uridine. This chain is tRNA-2-methylthio-N(6)-dimethylallyladenosine synthase, found in Neorickettsia sennetsu (strain ATCC VR-367 / Miyayama) (Ehrlichia sennetsu).